The sequence spans 91 residues: Protein LURE 1.3 (91 aa).

The first 20 residues, 1–20 (MKLPFIFLITLLIFVSSCTS), serve as a signal peptide directing secretion. N-linked (GlcNAc...) asparagine glycosylation occurs at Asn-24. Disulfide bonds link Cys-59–Cys-76, Cys-62–Cys-83, and Cys-66–Cys-85. Residues 68 to 88 (RRGKYIRTCSFERKLCRCSIS) are PRK6 binding.

Belongs to the DEFL family. Binds to PRK6 LRRs. As to expression, expressed in the pistil. Detected exclusively in the synergid cells.

The protein localises to the secreted. Pollen tube attractants guiding pollen tubes to the ovular micropyle. Attracts pollen tubes from both A.thaliana and A.lyrata. The polypeptide is Protein LURE 1.3 (Arabidopsis thaliana (Mouse-ear cress)).